A 131-amino-acid polypeptide reads, in one-letter code: Fumarate reductase subunit C (131 aa).

The next 3 membrane-spanning stretches (helical) occupy residues 30–50 (EGTAVPTVWFSIVLIYGLFAL), 61–81 (IGFLQNPVVVILNLITLAAAL), and 110–130 (IKGLWVVTAVVTVVILFVALF).

The protein belongs to the FrdC family. Part of an enzyme complex containing four subunits: a flavoprotein (FrdA), an iron-sulfur protein (FrdB), and two hydrophobic anchor proteins (FrdC and FrdD).

It localises to the cell inner membrane. In terms of biological role, two distinct, membrane-bound, FAD-containing enzymes are responsible for the catalysis of fumarate and succinate interconversion; fumarate reductase is used in anaerobic growth, and succinate dehydrogenase is used in aerobic growth. Anchors the catalytic components of the fumarate reductase complex to the cell inner membrane, binds quinones. This chain is Fumarate reductase subunit C, found in Klebsiella pneumoniae (strain 342).